The primary structure comprises 705 residues: Fatty acid oxidation complex subunit alpha (705 aa).

The segment at Met-1–Pro-190 is enoyl-CoA hydratase. A 3-hydroxyacyl-CoA dehydrogenase region spans residues Ser-308–Asn-705.

The protein in the N-terminal section; belongs to the enoyl-CoA hydratase/isomerase family. It in the central section; belongs to the 3-hydroxyacyl-CoA dehydrogenase family. As to quaternary structure, heterotetramer of two alpha chains (FadJ) and two beta chains (FadI).

It is found in the cytoplasm. It catalyses the reaction a (3S)-3-hydroxyacyl-CoA = a (2E)-enoyl-CoA + H2O. The catalysed reaction is a 4-saturated-(3S)-3-hydroxyacyl-CoA = a (3E)-enoyl-CoA + H2O. The enzyme catalyses a (3S)-3-hydroxyacyl-CoA + NAD(+) = a 3-oxoacyl-CoA + NADH + H(+). It carries out the reaction (3S)-3-hydroxybutanoyl-CoA = (3R)-3-hydroxybutanoyl-CoA. The protein operates within lipid metabolism; fatty acid beta-oxidation. Its function is as follows. Catalyzes the formation of a hydroxyacyl-CoA by addition of water on enoyl-CoA. Also exhibits 3-hydroxyacyl-CoA epimerase and 3-hydroxyacyl-CoA dehydrogenase activities. In Vibrio vulnificus (strain CMCP6), this protein is Fatty acid oxidation complex subunit alpha.